The following is a 338-amino-acid chain: Formimidoylglutamase (338 aa).

Mn(2+) is bound by residues His-137, Asp-166, His-168, Asp-170, Cys-259, and Asp-261.

It belongs to the arginase family. Requires Mn(2+) as cofactor.

It carries out the reaction N-formimidoyl-L-glutamate + H2O = formamide + L-glutamate. The protein operates within amino-acid degradation; L-histidine degradation into L-glutamate; L-glutamate from N-formimidoyl-L-glutamate (hydrolase route): step 1/1. In terms of biological role, catalyzes the conversion of N-formimidoyl-L-glutamate to L-glutamate and formamide. The chain is Formimidoylglutamase from Clostridium tetani (strain Massachusetts / E88).